A 294-amino-acid chain; its full sequence is Phosphatidylserine decarboxylase proenzyme (294 aa).

Active-site charge relay system; for autoendoproteolytic cleavage activity residues include Asp-100, His-157, and Ser-261. Ser-261 functions as the Schiff-base intermediate with substrate; via pyruvic acid; for decarboxylase activity in the catalytic mechanism. Pyruvic acid (Ser); by autocatalysis is present on Ser-261.

Belongs to the phosphatidylserine decarboxylase family. PSD-B subfamily. Prokaryotic type I sub-subfamily. Heterodimer of a large membrane-associated beta subunit and a small pyruvoyl-containing alpha subunit. It depends on pyruvate as a cofactor. In terms of processing, is synthesized initially as an inactive proenzyme. Formation of the active enzyme involves a self-maturation process in which the active site pyruvoyl group is generated from an internal serine residue via an autocatalytic post-translational modification. Two non-identical subunits are generated from the proenzyme in this reaction, and the pyruvate is formed at the N-terminus of the alpha chain, which is derived from the carboxyl end of the proenzyme. The autoendoproteolytic cleavage occurs by a canonical serine protease mechanism, in which the side chain hydroxyl group of the serine supplies its oxygen atom to form the C-terminus of the beta chain, while the remainder of the serine residue undergoes an oxidative deamination to produce ammonia and the pyruvoyl prosthetic group on the alpha chain. During this reaction, the Ser that is part of the protease active site of the proenzyme becomes the pyruvoyl prosthetic group, which constitutes an essential element of the active site of the mature decarboxylase.

It is found in the cell membrane. It catalyses the reaction a 1,2-diacyl-sn-glycero-3-phospho-L-serine + H(+) = a 1,2-diacyl-sn-glycero-3-phosphoethanolamine + CO2. The protein operates within phospholipid metabolism; phosphatidylethanolamine biosynthesis; phosphatidylethanolamine from CDP-diacylglycerol: step 2/2. Its function is as follows. Catalyzes the formation of phosphatidylethanolamine (PtdEtn) from phosphatidylserine (PtdSer). In Histophilus somni (strain 2336) (Haemophilus somnus), this protein is Phosphatidylserine decarboxylase proenzyme.